A 466-amino-acid polypeptide reads, in one-letter code: MSHSWDYDAIVIGSGPGGEGAAMGLVKQGARVAVIERYHNVGGGCTHWGTIPSKALRHAVSRIIEFNQNPLYSDHSRLLRSSFADILNHADSVINQQTHMRQGFYERNHCEILQGNAHFVDEHTLALECHDGTVETVTAEKFVIACGSRPYHPADVDFHHPRIYDSDSILSLQHEPRHVIIYGAGVIGCEYASIFRGMEVKVDLINTRDRLLAFLDQEMSDSLSYHFWNSGVVIRHNEEYEKIEGVDDGVIMHLKSGKKLKADCLLYANGRTGNTDTLALENIGLQTDSRGQLKVNSMYQTALPHIYAVGDVIGYPSLASAAYDQGRIAAQALVKGEASAHLIEDIPTGIYTIPEISSVGKTEQQLTAMKVPYEVGRAQFKHLARAQIVGMSVGTLKILFHRETKEILGIHCFGERAAEIIHIGQAIMEQKGGGNTIEYFVNTTFNYPTMAEAYRVAALNGLNRLF.

An FAD-binding site is contributed by 36 to 45; sequence ERYHNVGGGC.

It belongs to the class-I pyridine nucleotide-disulfide oxidoreductase family. FAD is required as a cofactor.

It localises to the cytoplasm. It catalyses the reaction NAD(+) + NADPH = NADH + NADP(+). Functionally, conversion of NADPH, generated by peripheral catabolic pathways, to NADH, which can enter the respiratory chain for energy generation. The polypeptide is Soluble pyridine nucleotide transhydrogenase (Klebsiella pneumoniae subsp. pneumoniae (strain ATCC 700721 / MGH 78578)).